A 118-amino-acid polypeptide reads, in one-letter code: UPF0251 protein TTE1845 (118 aa).

It belongs to the UPF0251 family.

The protein is UPF0251 protein TTE1845 of Caldanaerobacter subterraneus subsp. tengcongensis (strain DSM 15242 / JCM 11007 / NBRC 100824 / MB4) (Thermoanaerobacter tengcongensis).